Here is a 196-residue protein sequence, read N- to C-terminus: Imidazoleglycerol-phosphate dehydratase (196 aa).

This sequence belongs to the imidazoleglycerol-phosphate dehydratase family.

The protein resides in the cytoplasm. The catalysed reaction is D-erythro-1-(imidazol-4-yl)glycerol 3-phosphate = 3-(imidazol-4-yl)-2-oxopropyl phosphate + H2O. The protein operates within amino-acid biosynthesis; L-histidine biosynthesis; L-histidine from 5-phospho-alpha-D-ribose 1-diphosphate: step 6/9. This Lachnoclostridium phytofermentans (strain ATCC 700394 / DSM 18823 / ISDg) (Clostridium phytofermentans) protein is Imidazoleglycerol-phosphate dehydratase.